The sequence spans 314 residues: Ribosomal protein L11 methyltransferase (314 aa).

S-adenosyl-L-methionine-binding residues include Thr152, Gly184, Asp206, and Asn248.

The protein belongs to the methyltransferase superfamily. PrmA family.

It localises to the cytoplasm. It carries out the reaction L-lysyl-[protein] + 3 S-adenosyl-L-methionine = N(6),N(6),N(6)-trimethyl-L-lysyl-[protein] + 3 S-adenosyl-L-homocysteine + 3 H(+). Functionally, methylates ribosomal protein L11. This Geotalea daltonii (strain DSM 22248 / JCM 15807 / FRC-32) (Geobacter daltonii) protein is Ribosomal protein L11 methyltransferase.